We begin with the raw amino-acid sequence, 99 residues long: Protein AC150 (99 aa).

A Chitin-binding type-2 domain is found at 38 to 96 (GFSCYNKPIGVNFPHPTRCDAFYMCVGLNQKLELICPEGFEFDPDVKNCVPISDYGCTA). Cysteine 73 and cysteine 86 are oxidised to a cystine.

Its subcellular location is the host nucleus. The protein resides in the virion. In terms of biological role, plays a role in primary oral infection of the host. In Autographa californica nuclear polyhedrosis virus (AcMNPV), this protein is Protein AC150.